A 642-amino-acid chain; its full sequence is Threonine--tRNA ligase (642 aa).

Positions 1–63 constitute a TGS domain; sequence MSTVTVTLPD…TADVELEIVT (63 aa). The catalytic stretch occupies residues 242–533; it reads DHRKIGQEMD…LTEHYNGKFP (292 aa). Cysteine 334, histidine 385, and histidine 510 together coordinate Zn(2+).

It belongs to the class-II aminoacyl-tRNA synthetase family. Homodimer. Zn(2+) serves as cofactor.

The protein localises to the cytoplasm. It catalyses the reaction tRNA(Thr) + L-threonine + ATP = L-threonyl-tRNA(Thr) + AMP + diphosphate + H(+). Catalyzes the attachment of threonine to tRNA(Thr) in a two-step reaction: L-threonine is first activated by ATP to form Thr-AMP and then transferred to the acceptor end of tRNA(Thr). In Haloarcula marismortui (strain ATCC 43049 / DSM 3752 / JCM 8966 / VKM B-1809) (Halobacterium marismortui), this protein is Threonine--tRNA ligase.